Consider the following 2601-residue polypeptide: Centrosomal protein of 295 kDa (2601 aa).

Residues 1–560 (MKRKVVNTHK…KKTQPTGVGI (560 aa)) form a necessary for centriole targeting and microtubule association region. Ser-14 is subject to Phosphoserine. 2 coiled-coil regions span residues 207-273 (KRPD…EDLA) and 500-552 (AARI…KRKK). Ser-654 and Ser-938 each carry phosphoserine. Residues 1008 to 1029 (PSADTKSGKIQEQHSSKSEKGL) are disordered. Positions 1013 to 1027 (KSGKIQEQHSSKSEK) are enriched in basic and acidic residues. Coiled coils occupy residues 1053–1082 (LHDS…VELL) and 1498–1544 (IQSH…VSSE). The interval 1558–1580 (ADSERTQKSFPTKSNDTLPSSHR) is disordered. A compositionally biased stretch (polar residues) spans 1565–1577 (KSFPTKSNDTLPS). A Phosphoserine modification is found at Ser-1637. Residues 1728-1758 (QEKLLVQRQTALQQQIQKHEETLKDFFKDSQ) are a coiled coil. 3 stretches are compositionally biased toward basic and acidic residues: residues 1795-1827 (RHAD…DLGR), 1985-2003 (FSEH…KEEE), and 2100-2112 (DNRD…DSSS). Disordered regions lie at residues 1795-1834 (RHAD…KPPV), 1979-2004 (LTDP…EEET), and 2085-2117 (HPDF…SHCA). Thr-2473 is subject to Phosphothreonine. The tract at residues 2478–2601 (SLQEAFIKRK…LEKLRAKNTC (124 aa)) is ALMS motif. Positions 2556–2581 (RLYNQLAEVKQQKEEKTKQEAYAQNR) form a coiled coil.

In terms of assembly, interacts (via ALMS motif) with microtubules; this interaction is direct.

It is found in the cytoplasm. Its subcellular location is the cytoskeleton. The protein localises to the microtubule organizing center. The protein resides in the centrosome. It localises to the centriole. It is found in the spindle. In terms of biological role, centriole-enriched microtubule-binding protein involved in centriole biogenesis. Essential for the generation of the distal portion of new-born centrioles in a CPAP- and CEP120-mediated elongation dependent manner during the cell cycle S/G2 phase after formation of the initiating cartwheel structure. Required for the recruitment of centriolar proteins, such as POC1B, POC5 and CEP135, into the distal portion of centrioles. Also required for centriole-to-centrosome conversion during mitotic progression, but is dispensable for cartwheel removal or centriole disengagement. Binds to and stabilizes centriolar microtubule. May be involved in ciliogenesis. In Homo sapiens (Human), this protein is Centrosomal protein of 295 kDa.